The chain runs to 75 residues: Exodeoxyribonuclease 7 small subunit (75 aa).

Belongs to the XseB family. In terms of assembly, heterooligomer composed of large and small subunits.

It is found in the cytoplasm. The catalysed reaction is Exonucleolytic cleavage in either 5'- to 3'- or 3'- to 5'-direction to yield nucleoside 5'-phosphates.. Its function is as follows. Bidirectionally degrades single-stranded DNA into large acid-insoluble oligonucleotides, which are then degraded further into small acid-soluble oligonucleotides. The chain is Exodeoxyribonuclease 7 small subunit from Citrifermentans bemidjiense (strain ATCC BAA-1014 / DSM 16622 / JCM 12645 / Bem) (Geobacter bemidjiensis).